A 488-amino-acid chain; its full sequence is Poly(3-hydroxybutyrate) depolymerase (488 aa).

The signal sequence occupies residues 1 to 27; it reads MVRRLWRRIAGWLAACVAILCAFPLHA. Ser-166 acts as the Charge relay system in catalysis. In terms of domain architecture, Fibronectin type-III spans 346–428; that stretch reads APTGLAVTAT…AAVSATTKSA (83 aa).

It belongs to the AB hydrolase superfamily. Lipase family.

The protein resides in the secreted. It catalyses the reaction [(3R)-hydroxybutanoate](n) + H2O = [(3R)-hydroxybutanoate](n-2) + (3R)-hydroxybutanoate dimer + H(+). The enzyme catalyses [(3R)-hydroxybutanoate](n) + H2O = [(3R)-hydroxybutanoate](n-3) + (3R)-hydroxybutanoate trimer + H(+). The catalysed reaction is [(3R)-hydroxybutanoate](n) + H2O = [(3R)-hydroxybutanoate](n-1) + (R)-3-hydroxybutanoate + H(+). It carries out the reaction [(3R)-hydroxybutanoate](n) + H2O = [(3R)-hydroxybutanoate](n-5) + (3R)-hydroxybutanoate pentamer + H(+). It catalyses the reaction [(3R)-hydroxybutanoate](n) + H2O = [(3R)-hydroxybutanoate](n-4) + (3R)-hydroxybutanoate tetramer + H(+). Its function is as follows. This protein degrades water-insoluble and water-soluble PHB to monomeric D(-)-3-hydroxybutyrate. This is Poly(3-hydroxybutyrate) depolymerase from Ralstonia pickettii (Burkholderia pickettii).